Reading from the N-terminus, the 486-residue chain is Cobyric acid synthase (486 aa).

A GATase cobBQ-type domain is found at 251-439; sequence RAKIVVPMLS…VHGLFERGEA (189 aa). Catalysis depends on Cys333, which acts as the Nucleophile. The active site involves His431.

It belongs to the CobB/CobQ family. CobQ subfamily.

It participates in cofactor biosynthesis; adenosylcobalamin biosynthesis. Its function is as follows. Catalyzes amidations at positions B, D, E, and G on adenosylcobyrinic A,C-diamide. NH(2) groups are provided by glutamine, and one molecule of ATP is hydrogenolyzed for each amidation. This is Cobyric acid synthase from Caulobacter sp. (strain K31).